Consider the following 284-residue polypeptide: L-ribulose-5-phosphate 3-epimerase UlaE (284 aa).

It belongs to the L-ribulose-5-phosphate 3-epimerase family.

It catalyses the reaction L-ribulose 5-phosphate = L-xylulose 5-phosphate. The protein operates within cofactor degradation; L-ascorbate degradation; D-xylulose 5-phosphate from L-ascorbate: step 3/4. Catalyzes the isomerization of L-xylulose-5-phosphate to L-ribulose-5-phosphate. Is involved in the anaerobic L-ascorbate utilization. This chain is L-ribulose-5-phosphate 3-epimerase UlaE, found in Salmonella paratyphi A (strain AKU_12601).